A 648-amino-acid chain; its full sequence is Zinc finger protein 202 (648 aa).

K22 participates in a covalent cross-link: Glycyl lysine isopeptide (Lys-Gly) (interchain with G-Cter in SUMO2). The SCAN box domain occupies 46–127; that stretch reads HQNFRRFRYQ…VTLVEGLQKQ (82 aa). The tract at residues 146–221 is disordered; the sequence is SEETVHLGVE…PDLPAERSSG (76 aa). A compositionally biased stretch (polar residues) spans 165–182; it reads PVQSSTPEQSPEETTQSP. In terms of domain architecture, KRAB spans 237 to 308; that stretch reads VTFKDVAVCF…DIQEPQETQE (72 aa). 2 consecutive C2H2-type zinc fingers follow at residues 397–419 and 425–447; these read HDCS…LRTH and YKCM…QKVH. Residues K454 and K460 each participate in a glycyl lysine isopeptide (Lys-Gly) (interchain with G-Cter in SUMO2) cross-link. S466 bears the Phosphoserine mark. The C2H2-type 3 zinc finger occupies 481–503; it reads YRCDDCGKHFRWTSDLVRHQRTH. Residues K507 and K521 each participate in a glycyl lysine isopeptide (Lys-Gly) (interchain with G-Cter in SUMO2) cross-link. C2H2-type zinc fingers lie at residues 509–531, 537–559, 565–587, 593–615, and 621–643; these read FFCT…QRIH, YLCG…RKTH, YLCS…LRGH, CRCN…QRTH, and FTCP…QRTH.

In terms of assembly, interacts with SDP1. In terms of tissue distribution, highly expressed in testis. Also expressed in breast carcinoma cell lines.

The protein localises to the nucleus. Functionally, transcriptional repressor that binds to elements found predominantly in genes that participate in lipid metabolism. Among its targets are structural components of lipoprotein particles (apolipoproteins AIV, CIII, and E), enzymes involved in lipid processing (lipoprotein lipase, lecithin cholesteryl ester transferase), transporters involved in lipid homeostasis (ABCA1, ABCG1), and several genes involved in processes related to energy metabolism and vascular disease. The polypeptide is Zinc finger protein 202 (ZNF202) (Homo sapiens (Human)).